Reading from the N-terminus, the 777-residue chain is Beta-hexosaminidase (777 aa).

A signal peptide spans 1–18 (MKRLTFGACICCLLSLMA). Residue C19 is the site of N-palmitoyl cysteine attachment. Residue C19 is the site of S-diacylglycerol cysteine attachment. Residues 625 to 766 (APKPGLTIRT…VMIRLKGEEK (142 aa)) enclose the PA14 domain.

It belongs to the glycosyl hydrolase 20 family.

It is found in the cell outer membrane. The enzyme catalyses Hydrolysis of terminal non-reducing N-acetyl-D-hexosamine residues in N-acetyl-beta-D-hexosaminides.. The chain is Beta-hexosaminidase (nahA) from Porphyromonas gingivalis (strain ATCC BAA-308 / W83).